The primary structure comprises 235 residues: MSLEIDAKAVSALLLGQGCANNLKTLLKNHETGSVSTEPLINSILDSFSFALSSQNIPRHVSQRSSKKKMCGIQGMEDSPTPAHIDGFIWRKYGQKTIKTSPHQRWYYRCAYAKDQNCDATKRVQKIQDNPPVYRNTYVGQHACEAPAYAVNNGGTYGSKMIKFDYVIPESVMPQPLSIDSQEITMEDKDTDDHILNYINEHLMEDEAYDVFPDVLGERCCFGLEPFPGLNINKS.

Positions 79 to 147 (SPTPAHIDGF…YVGQHACEAP (69 aa)) form a DNA-binding region, WRKY.

Belongs to the WRKY group III family.

It localises to the nucleus. In terms of biological role, transcription factor. Interacts specifically with the W box (5'-(T)TGAC[CT]-3'), a frequently occurring elicitor-responsive cis-acting element. In Arabidopsis thaliana (Mouse-ear cress), this protein is Probable WRKY transcription factor 66 (WRKY66).